The sequence spans 451 residues: MEKKYFGTDGIRGKVGERPITPDFILHLGWAVGRVLAQGRQSKVLIGKDTRISGYMFESALQAGLSAAGVDIRLLGPMPTPAIAYLTRTLHAKAGIVISASHNPYYDNGIKFFSSAGTKLPDEIEVAIEAELEKPMQTATSSRLGKAERVVDAAGRYIEFCKSTGPASVDLSELRLVLDCAHGATYQVAPEVFAEMGADITVIGASPNGLNINENCGSTALESLQHKVLECKADVGIALDGDGDRVIMIDQRGEIVDGDDILYIIARARQRTSKLTGAVVGTLMSNLGLEKALATLGIPLMRSQVGDRYVLEMLQCNGYSLGGESSGHIICLDRTTTGDGIVSALQVLVEMVATGHSLYELKSGVVKYPQCLINVQVARSINLHDNNAIINAMQEAENQLGDEGRVLLRPSGTEPVVRVMVEGRDISQVNSLAQQLAQEVAFHLGNPQICP.

The Phosphoserine intermediate role is filled by Ser-101. Positions 101, 240, 242, and 244 each coordinate Mg(2+). Ser-101 bears the Phosphoserine mark.

It belongs to the phosphohexose mutase family. Mg(2+) is required as a cofactor. Post-translationally, activated by phosphorylation.

It carries out the reaction alpha-D-glucosamine 1-phosphate = D-glucosamine 6-phosphate. In terms of biological role, catalyzes the conversion of glucosamine-6-phosphate to glucosamine-1-phosphate. This Nitrosococcus oceani (strain ATCC 19707 / BCRC 17464 / JCM 30415 / NCIMB 11848 / C-107) protein is Phosphoglucosamine mutase.